A 355-amino-acid polypeptide reads, in one-letter code: Epoxyqueuosine reductase (355 aa).

Asp143 acts as the Proton donor in catalysis. Positions 185–217 (LPLPIDTPATAHCGTCTRCIDICPTQAIIAPHR) constitute a 4Fe-4S ferredoxin-type domain. [4Fe-4S] cluster contacts are provided by Cys197, Cys200, Cys203, Cys207, Cys223, Cys250, Cys253, and Cys257.

This sequence belongs to the QueG family. Monomer. Requires cob(II)alamin as cofactor. The cofactor is [4Fe-4S] cluster.

It is found in the cytoplasm. The enzyme catalyses epoxyqueuosine(34) in tRNA + AH2 = queuosine(34) in tRNA + A + H2O. The protein operates within tRNA modification; tRNA-queuosine biosynthesis. In terms of biological role, catalyzes the conversion of epoxyqueuosine (oQ) to queuosine (Q), which is a hypermodified base found in the wobble positions of tRNA(Asp), tRNA(Asn), tRNA(His) and tRNA(Tyr). In Xanthomonas campestris pv. campestris (strain ATCC 33913 / DSM 3586 / NCPPB 528 / LMG 568 / P 25), this protein is Epoxyqueuosine reductase.